The chain runs to 194 residues: MSEVRIAAEPRTEFGKGAARRARRAGKVPAVLYGHGIAPRHINLPGHDLMLALKTPNVLLRLEGVDEKESLVLPKSVQRDPIKGFLEHVDLLVVQRGEKVVVEVPLLVKGEVGAGGVLNLEMAQAEVRAEATRIPEGIEVDVDGLPIGTNVTAGDLKLPEGVELAMDPETIVMSVVAEAAPEATEEEEEGEAAE.

It belongs to the bacterial ribosomal protein bL25 family. CTC subfamily. In terms of assembly, part of the 50S ribosomal subunit; part of the 5S rRNA/L5/L18/L25 subcomplex. Contacts the 5S rRNA. Binds to the 5S rRNA independently of L5 and L18.

In terms of biological role, this is one of the proteins that binds to the 5S RNA in the ribosome where it forms part of the central protuberance. The sequence is that of Large ribosomal subunit protein bL25 from Thermobifida fusca (strain YX).